A 1055-amino-acid polypeptide reads, in one-letter code: Ubiquitin carboxyl-terminal hydrolase 25 (1055 aa).

The UBA-like domain occupies 14–57; sequence QKHQQTFLNQLREITGINDTQILQQALKDSNGNLELAVAFLTAK. Positions 77–102 are SUMO interaction domain (SIM); it reads NDRYISVGSQADTNVIDLTGDDKDDL. Residue S85 is modified to Phosphoserine. The Required for SUMO paralog-specific binding signature appears at 89 to 95; sequence TNVIDLT. 2 consecutive UIM domains span residues 97-116 and 123-140; these read DDKDDLQRAIALSLAESNRA and TDEEQAISRVLEASIAEN. A Glycyl lysine isopeptide (Lys-Gly) (interchain with G-Cter in SUMO); alternate cross-link involves residue K99. Residue K99 forms a Glycyl lysine isopeptide (Lys-Gly) (interchain with G-Cter in ubiquitin); alternate linkage. The USP domain maps to 169–657; the sequence is VGLKNVGNTC…SAYCLMYIND (489 aa). The active site involves C178. The disordered stretch occupies residues 464 to 507; sequence VCTSPVDDIDASSPPSGSIPSQTLPSTTEQQGALSSELPSTSPS. Residues 476–496 are compositionally biased toward polar residues; that stretch reads SPPSGSIPSQTLPSTTEQQGA. Residues 497–507 are compositionally biased toward low complexity; it reads LSSELPSTSPS. Residues 541-578 adopt a coiled-coil conformation; the sequence is TEEELSVLESCLHRWRTEIENDTRDLQESISRIHRTIE. Active-site residues include H599 and H607. A coiled-coil region spans residues 684 to 717; that stretch reads DLRDFVEEDNQRFEKELEEWDAQLAQKALQEKLL. Residues 727-749 are disordered; the sequence is TSVTTAQAAGDPEYLEQPSRSDF. Position 740 is a phosphotyrosine (Y740).

It belongs to the peptidase C19 family. In terms of assembly, homotetramer, inhibited form. Homodimer, active form. Interacts with ACTA1 (via its C-terminus); the interaction occurs for all isoforms but is strongest for isoform USP25m in muscle differentiating cells. Interacts (isoform USP25m only) with MYBPC1; the interaction prevents proteasomal degradation of MYBPC1. Interacts (isoform USP25m only) with FLNC (via filament repeats 17-18, 20-21 and 24). Interacts with GAPDH. Interacts with SUMO3; the interaction sumoylates efficiently USP25. Interacts with SUMO2; the interaction sumoylates efficiently USP25. Interacts with SUMO1; the interaction only weakly sumoylates USP25. Interacts with SYK; phosphorylates USP25 and regulates USP25 intracellular levels. Acetylated. In terms of processing, sumoylation impairs binding to and hydrolysis of ubiquitin chains. Sumoylated preferentially with SUMO2 or SUMO3. Desumoylated by SENP1. Polyubiquitinated by SMURF1 by promoting the 'Lys-48'-linkage leading to proteasomal degradation. Post-translationally, preferentially monoubiquitinated but can also be polyubiquitinated. Autodeubiquitinated. Ubiquitination activates the enzymatic activity either by preventing sumoylation or by allowing novel interactions. Phosphorylation in the C-terminal by SYK regulates USP25 cellular levels. In terms of tissue distribution, isoform USP25a is found in most adult and fetal tissues; expression is moderately high in testis, pancreas, kidney, skeletal muscle, liver, lung, placenta, heart, but very low in peripheral blood, colon, small intestine, ovary, prostate, thymus and spleen. Expressed in the brain, with high levels in the cerebral cortex. Isoform USP25b is found in all tissues except heart and skeletal muscle. Isoform USP25m is heart and skeletal muscle specific.

The protein resides in the cytoplasm. Its subcellular location is the nucleus. It catalyses the reaction Thiol-dependent hydrolysis of ester, thioester, amide, peptide and isopeptide bonds formed by the C-terminal Gly of ubiquitin (a 76-residue protein attached to proteins as an intracellular targeting signal).. Functionally, deubiquitinating enzyme that hydrolyzes ubiquitin moieties conjugated to substrates and thus, functions in various biological processes including inflammation and immune response. Modulates the Wnt/beta-catenin pathway by deubiquitinating and stabilizing tankyrases TNKS1 and TNKS2. Regulates KEAP1-NRF2 axis in the defense against oxidative assaults by deubiquitinating KEAP1 and protecting it from degradation leading to degradation of the NRF2 transcription factor that is responsible for mounting an anti-oxidation gene expression program. Positively regulates RNA virus-induced innate signaling by interacting with and deubiquitinating ERLIN1 and ERLIN2. In turn, restricts virus production by regulating cholesterol biosynthetic flux. Acts as a negative regulator of interleukin-17-mediated signaling and inflammation through the removal of 'Lys-63'-linked ubiquitination of TRAF5 and TRAF6. Prevents the ubiquitination and degradation of TRAF3 to reduce the phosphorylation levels of JNK and P38, the secretion of IL-1B and to induce endotoxin tolerance. In terms of biological role, the muscle-specific isoform (USP25m) may have a role in the regulation of muscular differentiation and function. This chain is Ubiquitin carboxyl-terminal hydrolase 25 (USP25), found in Homo sapiens (Human).